A 5065-amino-acid chain; its full sequence is Dynein heavy chain-like protein 1 (5065 aa).

A stem region spans residues 1 to 1957; sequence MELEKTHLIN…IIKMADATFE (1957 aa). A coiled-coil region spans residues 1677–1705; it reads QMEGFQKQLDRLSDSLSKIQKALGEYLEK. The segment at 1958–2179 is AAA 1; that stretch reads YGYEYLGMCE…LRSLKSVLNS (222 aa). 1996-2003 serves as a coordination point for ATP; that stretch reads GPAGTGKT. Residues 2203-2223 are disordered; it reads FNETLDNNNNNDNNNERKTTT. Low complexity predominate over residues 2204-2215; the sequence is NETLDNNNNNDN. AAA regions lie at residues 2281–2632, 2751–3004, and 3097–3367; these read NEIH…YEYI, DVDR…WKLA, and IFNE…GNRY. 2319–2326 contacts ATP; the sequence is GDVGTGKS. The tract at residues 2507 to 2529 is disordered; sequence EKNQNGNENGNENEKKNINIINN. Residues 2790–2797 and 3135–3142 each bind ATP; these read GPPGSGKT and GASGAGKT. The tract at residues 3386–3701 is stalk; that stretch reads IDEKKEEVSS…ETFINLEEAS (316 aa). 2 coiled-coil regions span residues 3388 to 3466 and 3970 to 3997; these read EKKE…LDEQ and TMEK…EVEN. AAA regions lie at residues 3754-3983 and 4289-4507; these read LSRP…EASK and FNKI…VVDS. Residues 4686-4705 show a composition bias toward basic and acidic residues; it reads KDKNKDEDKNKNKENDDNNK. The disordered stretch occupies residues 4686-4727; it reads KDKNKDEDKNKNKENDDNNKKHIGNNKLVISSSERTESETSE.

This sequence belongs to the dynein heavy chain family. In terms of assembly, consists of at least two heavy chains and a number of intermediate and light chains.

It localises to the cytoplasm. The protein resides in the cytoskeleton. Functionally, acts as a motor for the intracellular retrograde motility of vesicles and organelles along microtubules. Dynein has ATPase activity; the force-producing power stroke is thought to occur on release of ADP. This chain is Dynein heavy chain-like protein 1, found in Plasmodium falciparum (isolate 3D7).